The following is an 886-amino-acid chain: Translation initiation factor IF-2 (886 aa).

Disordered regions lie at residues 46–91 (LDHL…VEVR) and 121–297 (EQQK…HGFT). Over residues 72 to 82 (STLSVTGSTGK) the composition is skewed to polar residues. Basic and acidic residues-rich tracts occupy residues 130-163 (AELK…AERK), 175-239 (AKSE…DHHL), and 246-260 (REAE…EQGT). Residues 386–555 (PRAPVVTVMG…LNQSELLELT (170 aa)) form the tr-type G domain. A G1 region spans residues 395–402 (GHVDHGKT). 395-402 (GHVDHGKT) contacts GTP. Positions 420-424 (GITQH) are G2. The segment at 441–444 (DTPG) is G3. GTP contacts are provided by residues 441–445 (DTPGH) and 495–498 (NKMD). The tract at residues 495-498 (NKMD) is G4. Residues 531–533 (SAK) are G5.

Belongs to the TRAFAC class translation factor GTPase superfamily. Classic translation factor GTPase family. IF-2 subfamily.

The protein resides in the cytoplasm. In terms of biological role, one of the essential components for the initiation of protein synthesis. Protects formylmethionyl-tRNA from spontaneous hydrolysis and promotes its binding to the 30S ribosomal subunits. Also involved in the hydrolysis of GTP during the formation of the 70S ribosomal complex. The polypeptide is Translation initiation factor IF-2 (Pseudoalteromonas translucida (strain TAC 125)).